The chain runs to 431 residues: Glutamate-1-semialdehyde 2,1-aminomutase (431 aa).

Lys269 is modified (N6-(pyridoxal phosphate)lysine).

The protein belongs to the class-III pyridoxal-phosphate-dependent aminotransferase family. HemL subfamily. As to quaternary structure, homodimer. Pyridoxal 5'-phosphate serves as cofactor.

It localises to the cytoplasm. It carries out the reaction (S)-4-amino-5-oxopentanoate = 5-aminolevulinate. It participates in porphyrin-containing compound metabolism; protoporphyrin-IX biosynthesis; 5-aminolevulinate from L-glutamyl-tRNA(Glu): step 2/2. The protein operates within porphyrin-containing compound metabolism; chlorophyll biosynthesis. The chain is Glutamate-1-semialdehyde 2,1-aminomutase from Chlorobium luteolum (strain DSM 273 / BCRC 81028 / 2530) (Pelodictyon luteolum).